Here is a 332-residue protein sequence, read N- to C-terminus: Glycerol-3-phosphate dehydrogenase [NAD(P)+] (332 aa).

Ser11, Phe12, Lys32, and Lys106 together coordinate NADPH. Residues Lys106, Gly137, and Ser139 each contribute to the sn-glycerol 3-phosphate site. Ala141 lines the NADPH pocket. Positions 192, 245, 255, 256, and 257 each coordinate sn-glycerol 3-phosphate. Lys192 (proton acceptor) is an active-site residue. Arg256 provides a ligand contact to NADPH. NADPH contacts are provided by Val280 and Glu282.

Belongs to the NAD-dependent glycerol-3-phosphate dehydrogenase family.

It localises to the cytoplasm. It catalyses the reaction sn-glycerol 3-phosphate + NAD(+) = dihydroxyacetone phosphate + NADH + H(+). The enzyme catalyses sn-glycerol 3-phosphate + NADP(+) = dihydroxyacetone phosphate + NADPH + H(+). The protein operates within membrane lipid metabolism; glycerophospholipid metabolism. Catalyzes the reduction of the glycolytic intermediate dihydroxyacetone phosphate (DHAP) to sn-glycerol 3-phosphate (G3P), the key precursor for phospholipid synthesis. This Staphylococcus carnosus (strain TM300) protein is Glycerol-3-phosphate dehydrogenase [NAD(P)+].